The following is a 102-amino-acid chain: Integration host factor subunit alpha (102 aa).

The protein belongs to the bacterial histone-like protein family. Heterodimer of an alpha and a beta chain.

Its function is as follows. This protein is one of the two subunits of integration host factor, a specific DNA-binding protein that functions in genetic recombination as well as in transcriptional and translational control. This is Integration host factor subunit alpha from Albidiferax ferrireducens (strain ATCC BAA-621 / DSM 15236 / T118) (Rhodoferax ferrireducens).